The chain runs to 56 residues: Large ribosomal subunit protein bL33c (56 aa).

This sequence belongs to the bacterial ribosomal protein bL33 family.

The protein resides in the plastid. Its subcellular location is the chloroplast. The polypeptide is Large ribosomal subunit protein bL33c (rpl33) (Guillardia theta (Cryptophyte)).